A 216-amino-acid chain; its full sequence is Orotidine 5'-phosphate decarboxylase (216 aa).

Substrate contacts are provided by residues Asp-12, Lys-34, 62–71 (DFKVADIDAT), Ser-119, 172–182 (PGVGFQGGNAK), Gly-194, and Arg-195. Lys-64 (proton donor) is an active-site residue.

This sequence belongs to the OMP decarboxylase family. Type 1 subfamily. Homodimer.

It carries out the reaction orotidine 5'-phosphate + H(+) = UMP + CO2. It functions in the pathway pyrimidine metabolism; UMP biosynthesis via de novo pathway; UMP from orotate: step 2/2. In terms of biological role, catalyzes the decarboxylation of orotidine 5'-monophosphate (OMP) to uridine 5'-monophosphate (UMP). This is Orotidine 5'-phosphate decarboxylase from Methanosphaera stadtmanae (strain ATCC 43021 / DSM 3091 / JCM 11832 / MCB-3).